A 767-amino-acid chain; its full sequence is Serine/threonine-protein kinase DCLK2 (767 aa).

Positions 1–44 (MASTRSIELEHFEERDKRPRPGSRRGAPSSSGGSSISGPKGNGL) are disordered. Basic and acidic residues predominate over residues 7–19 (IELEHFEERDKRP). Residues 24 to 43 (RRGAPSSSGGSSISGPKGNG) are compositionally biased toward low complexity. T61 carries the phosphothreonine modification. 2 Doublecortin domains span residues 72-158 (KKAR…VDYT) and 196-279 (KLVT…AQDD). Residues 301–311 (KYSGSRSPGLS) show a composition bias toward low complexity. The tract at residues 301–391 (KYSGSRSPGL…GPELDRCMSP (91 aa)) is disordered. Over residues 327–338 (SAYSTAKSPVNG) the composition is skewed to polar residues. Positions 339 to 362 (TPSSQLSTPKSTKSSSSSPTSPGS) are enriched in low complexity. Residues 369 to 380 (ISAQGRSSSNVN) show a composition bias toward polar residues. The residue at position 377 (S377) is a Phosphoserine. One can recognise a Protein kinase domain in the interval 409–666 (YRIGKVIGDG…AGEILSHPWV (258 aa)). Residues 415–423 (IGDGNFAVV) and K438 contribute to the ATP site. The active-site Proton acceptor is the D530. At S662 the chain carries Phosphoserine. T681 is modified (phosphothreonine). A compositionally biased stretch (basic and acidic residues) spans 721–734 (HCRDSSKSSREQTS). The interval 721 to 767 (HCRDSSKSSREQTSAREAPPPPESPRPPGPPATSGCDPAGTWRRHRD) is disordered. A compositionally biased stretch (pro residues) spans 738–751 (APPPPESPRPPGPP).

The protein belongs to the protein kinase superfamily. CAMK Ser/Thr protein kinase family. CaMK subfamily. In terms of assembly, interacts with MAPK8IP1/JIP-1, MAPK8IP2/JIP-2, MAPK9/JNK2, PPP1R9B/NEURABIN-2 and actin. Binds to and stabilizes microtubules; binding affinity is strongly reduced by autophosphorylation. In terms of processing, autophosphorylated.

It is found in the cytoplasm. The protein localises to the cytoskeleton. It carries out the reaction L-seryl-[protein] + ATP = O-phospho-L-seryl-[protein] + ADP + H(+). It catalyses the reaction L-threonyl-[protein] + ATP = O-phospho-L-threonyl-[protein] + ADP + H(+). Its function is as follows. Protein kinase with a significantly reduced Ca(2+)+/CAM affinity and dependence compared to other members of the CaMK family. May play a role in the down-regulation of CRE-dependent gene activation probably by phosphorylation of the CREB coactivator CRTC2/TORC2 and the resulting retention of TORC2 in the cytoplasm. The chain is Serine/threonine-protein kinase DCLK2 (Dclk2) from Rattus norvegicus (Rat).